An 800-amino-acid chain; its full sequence is Heterogeneous nuclear ribonucleoprotein U (800 aa).

Residue S2 is modified to N-acetylserine. S4 carries the post-translational modification Phosphoserine. Positions 8-42 constitute an SAP domain; the sequence is VKKLKVSELKEELKKRRLSDKGLKADLMDRLQAAL. 2 positions are modified to N6-acetyllysine: K17 and K21. Residues 41 to 257 are disordered; it reads ALDNEAGGRP…PQPPVEEEDE (217 aa). Residue S58 is modified to Phosphoserine. Composition is skewed to low complexity over residues 71–80 and 103–113; these read AGLEQEAAAG and ENGAAGAADAG. Composition is skewed to acidic residues over residues 114-128 and 134-147; these read AMEE…ENGD and EGED…EGAG. A compositionally biased stretch (low complexity) spans 153–173; that stretch reads GEQQSQPPAAAAQQQPSQQRG. K181 carries the post-translational modification N6-acetyllysine. S182 carries the post-translational modification ADP-ribosylserine. Over residues 194 to 205 the composition is skewed to low complexity; that stretch reads APPGARQGQQQA. A compositionally biased stretch (basic and acidic residues) spans 209 to 242; sequence GKTEQKGGDKKRGVKRPREDHGRGYFEYIEENKY. A Citrulline modification is found at R231. K241 is subject to N6-acetyllysine; alternate. A Glycyl lysine isopeptide (Lys-Gly) (interchain with G-Cter in SUMO1); alternate cross-link involves residue K241. K241 is covalently cross-linked (Glycyl lysine isopeptide (Lys-Gly) (interchain with G-Cter in SUMO2); alternate). Y242 bears the Phosphotyrosine mark. Residues S243 and S247 each carry the phosphoserine modification. Residues 244–440 enclose the B30.2/SPRY domain; that stretch reads RAKSPQPPVE…VEFNFGQKEK (197 aa). At T262 the chain carries Phosphothreonine. N6-acetyllysine is present on K328. An ATPase domain region spans residues 464 to 648; it reads PKGPEEKKDC…QKLLEQYKEE (185 aa). K471 is covalently cross-linked (Glycyl lysine isopeptide (Lys-Gly) (interchain with G-Cter in SUMO2)). 480–487 is an ATP binding site; sequence GLPGAGKT. An N6-acetyllysine; alternate mark is found at K492 and K500. Residues K492 and K500 each participate in a glycyl lysine isopeptide (Lys-Gly) (interchain with G-Cter in SUMO2); alternate cross-link. T508 is subject to Phosphothreonine. Residue K512 forms a Glycyl lysine isopeptide (Lys-Gly) (interchain with G-Cter in SUMO2) linkage. Residue K527 is modified to N6-acetyllysine. K541 is subject to N6-acetyllysine; alternate. A Glycyl lysine isopeptide (Lys-Gly) (interchain with G-Cter in SUMO2); alternate cross-link involves residue K541. A Glycyl lysine isopeptide (Lys-Gly) (interchain with G-Cter in SUMO2) cross-link involves residue K550. The residue at position 558 (T558) is a Phosphothreonine. Glycyl lysine isopeptide (Lys-Gly) (interchain with G-Cter in SUMO2) cross-links involve residues K585 and K602. Positions 587-602 are actin-binding; that stretch reads EDYKQRTQKKAEVEGK. An N6-acetyllysine; alternate modification is found at K611. A Glycyl lysine isopeptide (Lys-Gly) (interchain with G-Cter in SUMO2); alternate cross-link involves residue K611. Residues 626–653 adopt a coiled-coil conformation; it reads DEITYVELQKEEAQKLLEQYKEESKKAL. Residues K640 and K646 each participate in a glycyl lysine isopeptide (Lys-Gly) (interchain with G-Cter in SUMO2) cross-link. Positions 647-659 are enriched in basic and acidic residues; sequence EESKKALPPEKKQ. Residues 647–729 are disordered; the sequence is EESKKALPPE…GSGGIGYPYP (83 aa). Residue R678 is modified to Omega-N-methylarginine. Gly residues predominate over residues 686-704; it reads GGFNMRGGNFRGGAPGNRG. The tract at residues 690–715 is RNA-binding RGG-box; that stretch reads MRGGNFRGGAPGNRGGYNRRGNMPQR. 3 positions are modified to asymmetric dimethylarginine: R691, R696, and R703. An asymmetric dimethylarginine; alternate mark is found at R709 and R715. Omega-N-methylarginine; alternate is present on residues R709 and R715. The span at 715–725 shows a compositional bias: gly residues; sequence RGGGGGSGGIG. An asymmetric dimethylarginine mark is found at R730 and R737. The interval 745–774 is disordered; that stretch reads NYNRGGMPNRGNYNQNFRGRGNNRGYKNQS. Position 789 is an N6-acetyllysine; alternate (K789). K789 participates in a covalent cross-link: Glycyl lysine isopeptide (Lys-Gly) (interchain with G-Cter in SUMO2); alternate.

As to quaternary structure, oligomer (via ATPase domain and RNA-binding RGG-box region); oligomerization occurs upon ATP-binding in a chromatin-associated RNAs (caRNAs)- and transcription-dependent manner and is required for chromatin decompaction. ATP hydrolysis is required to cycle from an oligomeric to monomeric state to compact chromatin. Component of the coding region determinant (CRD)-mediated complex, composed of DHX9, HNRNPU, IGF2BP1, SYNCRIP and YBX1. Identified in the spliceosome C complex. Identified in a IGF2BP1-dependent mRNP granule complex containing untranslated mRNAs. Associates with heterogeneous nuclear ribonucleoprotein (hnRNP) particles. Associates (via middle region) with the C-terminal domain (CTD) RNA polymerase II (Pol II) holoenzyme; this association occurs in a RNA-independent manner. Associates (via middle region) with the core-TFIIH basal transcription factor complex; this association inhibits the CTD phosphorylation of RNA polymerase II holoenzyme by down-regulating TFIIH kinase activity. Associates with the telomerase holoenzyme complex. Associates with spindle microtubules (MTs) in a TPX2-dependent manner. Interacts (via C-terminus) with actin; this interaction is direct and mediates association with the phosphorylated CTD of RNA polymerase II and is disrupted in presence of the long non-coding H19 RNA. Interacts with AURKA. Interacts (via C-terminus) with CBX5; this interaction is, at least in part, RNA-dependent. Interacts with CR2. Interacts with CRY1. Interacts (via C-terminus) with EP300; this interaction enhances DNA-binding to nuclear scaffold/matrix attachment region (S/MAR) elements. Interacts with ERBB4. Interacts with GEMIN5. Interacts with IGF2BP1. Interacts with IGF2BP2 and IGF2BP3. Interacts with NCL; this interaction occurs during mitosis. Interacts (via C-terminus) with NR3C1 (via C-terminus). Interacts with PLK1; this interaction induces phosphorylation of HNRNPU at Ser-58 in mitosis. Interacts with POU3F4. Interacts with SMARCA4; this interaction occurs in embryonic stem cells and stimulates global Pol II-mediated transcription. Interacts (via C-terminus) with TOP2A; this interaction protects the topoisomerase TOP2A from degradation and positively regulates the relaxation of supercoiled DNA by TOP2A in a RNA-dependent manner. Interacts with TPX2; this interaction recruits HNRNPU to spindle microtubules (MTs). Interacts with UBQLN2. Interacts (via RNA-binding RGG-box region) with ZBTB7B; the interaction facilitates the recruitment of long non-coding RNA Blnc1 by ZBTB7B. Interacts with ERCC6. Cleaved at Asp-94 by CASP3 during T-cell apoptosis, resulting in a loss of DNA- and chromatin-binding activities. In terms of processing, extensively phosphorylated. Phosphorylated on Ser-58 by PLK1 and dephosphorylated by protein phosphatase 2A (PP2A) in mitosis. Post-translationally, arg-709 and Arg-715 are dimethylated, probably to asymmetric dimethylarginine. Citrullinated by PADI4.

Its subcellular location is the nucleus. It localises to the nucleus matrix. The protein localises to the chromosome. The protein resides in the nucleus speckle. It is found in the cytoplasm. Its subcellular location is the cytoskeleton. It localises to the microtubule organizing center. The protein localises to the centrosome. The protein resides in the centromere. It is found in the kinetochore. Its subcellular location is the spindle. It localises to the spindle pole. The protein localises to the midbody. The protein resides in the cell surface. It is found in the cytoplasmic granule. Functionally, DNA- and RNA-binding protein involved in several cellular processes such as nuclear chromatin organization, telomere-length regulation, transcription, mRNA alternative splicing and stability, Xist-mediated transcriptional silencing and mitotic cell progression. Plays a role in the regulation of interphase large-scale gene-rich chromatin organization through chromatin-associated RNAs (caRNAs) in a transcription-dependent manner, and thereby maintains genomic stability. Required for the localization of the long non-coding Xist RNA on the inactive chromosome X (Xi) and the subsequent initiation and maintenance of X-linked transcriptional gene silencing during X-inactivation. Plays a role as a RNA polymerase II (Pol II) holoenzyme transcription regulator. Promotes transcription initiation by direct association with the core-TFIIH basal transcription factor complex for the assembly of a functional pre-initiation complex with Pol II in a actin-dependent manner. Blocks Pol II transcription elongation activity by inhibiting the C-terminal domain (CTD) phosphorylation of Pol II and dissociates from Pol II pre-initiation complex prior to productive transcription elongation. Positively regulates CBX5-induced transcriptional gene silencing and retention of CBX5 in the nucleus. Negatively regulates glucocorticoid-mediated transcriptional activation. Key regulator of transcription initiation and elongation in embryonic stem cells upon leukemia inhibitory factor (LIF) signaling. Involved in the long non-coding RNA H19-mediated Pol II transcriptional repression. Participates in the circadian regulation of the core clock component BMAL1 transcription. Plays a role in the regulation of telomere length. Plays a role as a global pre-mRNA alternative splicing modulator by regulating U2 small nuclear ribonucleoprotein (snRNP) biogenesis. Plays a role in mRNA stability. Component of the CRD-mediated complex that promotes MYC mRNA stabilization. Enhances the expression of specific genes, such as tumor necrosis factor TNFA, by regulating mRNA stability, possibly through binding to the 3'-untranslated region (UTR). Plays a role in mitotic cell cycle regulation. Involved in the formation of stable mitotic spindle microtubules (MTs) attachment to kinetochore, spindle organization and chromosome congression. Phosphorylation at Ser-58 by PLK1 is required for chromosome alignement and segregation and progression through mitosis. Also contributes to the targeting of AURKA to mitotic spindle MTs. Binds to double- and single-stranded DNA and RNA, poly(A), poly(C) and poly(G) oligoribonucleotides. Binds to chromatin-associated RNAs (caRNAs). Associates with chromatin to scaffold/matrix attachment region (S/MAR) elements in a chromatin-associated RNAs (caRNAs)-dependent manner. Binds (via RNA-binding RGG-box region) to the long non-coding Xist RNA; this binding is direct and bridges the Xist RNA and the inactive chromosome X (Xi). Binds the long non-coding H19 RNA. Binds to SMN1/2 pre-mRNAs at G/U-rich regions. Binds to small nuclear RNAs (snRNAs). Binds to the 3'-UTR of TNFA mRNA. Also negatively regulates embryonic stem cell differentiation upon LIF signaling. Required for embryonic development. Binds to brown fat long non-coding RNA 1 (Blnc1); facilitates the recruitment of Blnc1 by ZBTB7B required to drive brown and beige fat development and thermogenesis. This is Heterogeneous nuclear ribonucleoprotein U from Mus musculus (Mouse).